A 283-amino-acid polypeptide reads, in one-letter code: Nucleotide-binding protein THEYE_A0235 (283 aa).

12 to 19 is an ATP binding site; the sequence is GLSGGGKT. 62–65 contributes to the GTP binding site; it reads DIRV.

This sequence belongs to the RapZ-like family.

Displays ATPase and GTPase activities. This chain is Nucleotide-binding protein THEYE_A0235, found in Thermodesulfovibrio yellowstonii (strain ATCC 51303 / DSM 11347 / YP87).